The following is a 566-amino-acid chain: DNA ligase B (566 aa).

Lys-125 functions as the N6-AMP-lysine intermediate in the catalytic mechanism.

This sequence belongs to the NAD-dependent DNA ligase family. LigB subfamily.

The catalysed reaction is NAD(+) + (deoxyribonucleotide)n-3'-hydroxyl + 5'-phospho-(deoxyribonucleotide)m = (deoxyribonucleotide)n+m + AMP + beta-nicotinamide D-nucleotide.. Its function is as follows. Catalyzes the formation of phosphodiester linkages between 5'-phosphoryl and 3'-hydroxyl groups in double-stranded DNA using NAD as a coenzyme and as the energy source for the reaction. The chain is DNA ligase B from Pseudomonas putida (strain ATCC 47054 / DSM 6125 / CFBP 8728 / NCIMB 11950 / KT2440).